A 163-amino-acid polypeptide reads, in one-letter code: Early nodulin-like protein 20 (163 aa).

The N-terminal stretch at Met-1–Ser-25 is a signal peptide. A Phytocyanin domain is found at Ser-26 to Pro-126. 5 N-linked (GlcNAc...) asparagine glycosylation sites follow: Asn-42, Asn-63, Asn-73, Asn-88, and Asn-135. Cys-80 and Cys-114 are oxidised to a cystine. Ser-138 carries the GPI-anchor amidated serine lipid modification. Positions Thr-139–Leu-163 are cleaved as a propeptide — removed in mature form.

It belongs to the early nodulin-like (ENODL) family.

It localises to the cell membrane. Functionally, may act as a carbohydrate transporter. This chain is Early nodulin-like protein 20, found in Arabidopsis thaliana (Mouse-ear cress).